The chain runs to 145 residues: Large ribosomal subunit protein bL17 (145 aa).

It belongs to the bacterial ribosomal protein bL17 family. Part of the 50S ribosomal subunit. Contacts protein L32.

The polypeptide is Large ribosomal subunit protein bL17 (Francisella tularensis subsp. holarctica (strain FTNF002-00 / FTA)).